The chain runs to 249 residues: Bis(5'-nucleosyl)-tetraphosphatase PrpE [asymmetrical] (249 aa).

Belongs to the PrpE family. The cofactor is Ni(2+).

It carries out the reaction P(1),P(4)-bis(5'-guanosyl) tetraphosphate + H2O = GMP + GTP + 2 H(+). In terms of biological role, asymmetrically hydrolyzes Ap4p to yield AMP and ATP. The chain is Bis(5'-nucleosyl)-tetraphosphatase PrpE [asymmetrical] from Bacillus velezensis (strain DSM 23117 / BGSC 10A6 / LMG 26770 / FZB42) (Bacillus amyloliquefaciens subsp. plantarum).